A 483-amino-acid polypeptide reads, in one-letter code: Uroporphyrinogen-III C-methyltransferase (483 aa).

It belongs to the precorrin methyltransferase family.

It catalyses the reaction uroporphyrinogen III + 2 S-adenosyl-L-methionine = precorrin-2 + 2 S-adenosyl-L-homocysteine + H(+). The sequence is that of Uroporphyrinogen-III C-methyltransferase (nasF) from Bacillus subtilis (strain 168).